A 174-amino-acid chain; its full sequence is Probasin (174 aa).

The N-terminal stretch at 1-18 (MMRVIILLLTLHVLGVSS) is a signal peptide. The cysteines at positions 77 and 168 are disulfide-linked.

It belongs to the calycin superfamily. Lipocalin family.

It localises to the secreted. This Mus musculus (Mouse) protein is Probasin (Pbsn).